A 344-amino-acid polypeptide reads, in one-letter code: Protein RecA (344 aa).

Residue 65-72 (GPESSGKT) coordinates ATP. A compositionally biased stretch (basic and acidic residues) spans 323–337 (ELREKFQPAEAPREA). Residues 323–344 (ELREKFQPAEAPREAGDDEDKE) form a disordered region.

Belongs to the RecA family.

Its subcellular location is the cytoplasm. Its function is as follows. Can catalyze the hydrolysis of ATP in the presence of single-stranded DNA, the ATP-dependent uptake of single-stranded DNA by duplex DNA, and the ATP-dependent hybridization of homologous single-stranded DNAs. It interacts with LexA causing its activation and leading to its autocatalytic cleavage. In Xanthomonas euvesicatoria pv. vesicatoria (strain 85-10) (Xanthomonas campestris pv. vesicatoria), this protein is Protein RecA.